Consider the following 272-residue polypeptide: Dickkopf-related protein 1 (272 aa).

The signal sequence occupies residues methionine 1–alanine 31. The O-linked (GalNAc...) serine glycan is linked to serine 62. Cystine bridges form between cysteine 86–cysteine 98, cysteine 92–cysteine 114, cysteine 117–cysteine 131, cysteine 124–cysteine 136, cysteine 130–cysteine 141, cysteine 195–cysteine 207, cysteine 201–cysteine 216, cysteine 206–cysteine 243, cysteine 226–cysteine 251, and cysteine 245–cysteine 269. The tract at residues cysteine 86 to cysteine 141 is DKK-type Cys-1. The DKK-type Cys-2 stretch occupies residues cysteine 195–cysteine 269. Residue asparagine 262 is glycosylated (N-linked (GlcNAc...) asparagine).

The protein belongs to the dickkopf family. As to quaternary structure, interacts (via the C-terminal Cys-rich domain) with LRP5 (via beta-propeller regions 3 and 4); the interaction, enhanced by MESD and or KREMEN, antagonizes Wnt-mediated signaling. Interacts with LRP6. Forms a ternary complex with LRP6 and KREM1. Interacts with KREM1.

Its subcellular location is the secreted. Antagonizes canonical Wnt signaling by inhibiting LRP5/6 interaction with Wnt and by forming a ternary complex with the transmembrane protein KREMEN that promotes internalization of LRP5/6. Inhibits the pro-apoptotic function of KREMEN1 in a Wnt-independent manner, and has anti-apoptotic activity. Plays a role in limb development; attenuates Wnt signaling in the developing limb to allow normal limb patterning. This Mus musculus (Mouse) protein is Dickkopf-related protein 1 (Dkk1).